The sequence spans 732 residues: MIITKEIDLGQGKTISIETGRMAKQADGATVVRMGDTMVIATVVSSKKTPSPNQDFFPLQVEYREKYYAAGKFPGGFFKREARPSEKEILSARLIDRALRPLFPTGYYYETQVIINVISSDQQNDADVLGGLAASAAIMVSDIPFENAMSEVRVGRVNGQFIINPTIDELEGSDIDISIGGTAGTICMLEGEMKEISEAEMLEAIRFGHEAIKKLCALQDSVQAAVAKAKRPFAPLQVPSELGAFISDACKARLKELAYTALAKEERAERTKEIYGETLKSAVEHFSAAFSSEDLAADPSKALCTNEHIIEEEIHSVEKDVMRRMILDDAKRLDGRTLDQVRPISIDLGVIPRAHGSALFTRGETQALVAVTLGTKKDAQSVDTLTNSADKRFMLHYNFPPFSVGEVGRLGTTGRREIGHGNLAERAIRMVAPTEQEFPYTIRIVSEILESNGSSSMASVCGGTLALMDGGVPLKKAVSGIAMGLIKEGSEYAVLSDILGNEDHLGDMDFKVSGTRDGITACQMDIKIDGLDYHILETALEQARRGRFHILDKMEEAIPASREDLAHYAPRLTAIQVPVESIGLIIGKGGETIRSITEETGAEINIEDDGTVTIACSSNEGTKGAVEIIKALIAKPEVGTVYIGKVRDIRDELGAFVEFIPKTDGLVHISEIANERVAKVSDHLKVGERVKVKLVDIRKDPRTGKTRFALSIKAALDAPDPGTEAAAAETNS.

2 residues coordinate Mg(2+): Asp503 and Asp509. In terms of domain architecture, KH spans 570–629; that stretch reads PRLTAIQVPVESIGLIIGKGGETIRSITEETGAEINIEDDGTVTIACSSNEGTKGAVEII. In terms of domain architecture, S1 motif spans 639-713; it reads GTVYIGKVRD…GKTRFALSIK (75 aa).

It belongs to the polyribonucleotide nucleotidyltransferase family. Mg(2+) is required as a cofactor.

Its subcellular location is the cytoplasm. It carries out the reaction RNA(n+1) + phosphate = RNA(n) + a ribonucleoside 5'-diphosphate. In terms of biological role, involved in mRNA degradation. Catalyzes the phosphorolysis of single-stranded polyribonucleotides processively in the 3'- to 5'-direction. The sequence is that of Polyribonucleotide nucleotidyltransferase from Chlorobium phaeovibrioides (strain DSM 265 / 1930) (Prosthecochloris vibrioformis (strain DSM 265)).